Consider the following 269-residue polypeptide: Small ribosomal subunit protein eS1 (269 aa).

Disordered regions lie at residues Met-1–Lys-20 and Ala-249–Val-269.

The protein belongs to the eukaryotic ribosomal protein eS1 family. As to quaternary structure, component of the small ribosomal subunit. Mature ribosomes consist of a small (40S) and a large (60S) subunit. The 40S subunit contains about 33 different proteins and 1 molecule of RNA (18S). The 60S subunit contains about 49 different proteins and 3 molecules of RNA (28S, 5.8S and 5S).

It is found in the cytoplasm. This is Small ribosomal subunit protein eS1 from Anopheles darlingi (Mosquito).